Here is a 72-residue protein sequence, read N- to C-terminus: MANRPLDILNNALDTPVIVRLKGAREFRGELKGYDIHMNLVLDNAEELREGEVVSKFGSVVIRGDNVVYVSP.

The 69-residue stretch at 4–72 (RPLDILNNAL…RGDNVVYVSP (69 aa)) folds into the Sm domain.

Belongs to the snRNP Sm proteins family.

The sequence is that of Putative snRNP Sm-like protein from Methanosarcina barkeri (strain Fusaro / DSM 804).